Consider the following 247-residue polypeptide: Probable transcriptional regulatory protein HRM2_04000 (247 aa).

Belongs to the TACO1 family.

The protein localises to the cytoplasm. The protein is Probable transcriptional regulatory protein HRM2_04000 of Desulforapulum autotrophicum (strain ATCC 43914 / DSM 3382 / VKM B-1955 / HRM2) (Desulfobacterium autotrophicum).